The chain runs to 289 residues: Rhodopsin (289 aa).

Topologically, residues 1-7 (YLVNPAG) are extracellular. The helical transmembrane segment at 8–32 (YAALGAYMFLLILIGFPVNFLTLYV) threads the bilayer. At 33-44 (TLEHKKLRTPLN) the chain is on the cytoplasmic side. The chain crosses the membrane as a helical span at residues 45 to 67 (YILLNLAVADLFMVLGGFTTTMY). The Extracellular portion of the chain corresponds to 68-81 (TSMHGYFVLGRLGC). A disulfide bridge links C81 with C158. The helical transmembrane segment at 82 to 104 (NLEGFFATLGGEIALWSLVVLAI) threads the bilayer. The short motif at 105–107 (ERW) is the 'Ionic lock' involved in activated form stabilization element. Residues 105–123 (ERWIVGLKPIRNFRFTEDH) lie on the Cytoplasmic side of the membrane. Residues 124–144 (AIMGLAFSWVMALSCAVPPLA) traverse the membrane as a helical segment. Residues 145 to 173 (GWLRYIPEGIQGSCGVDYYTRAEGFNNES) lie on the Extracellular side of the membrane. The N-linked (GlcNAc...) asparagine glycan is linked to N171. Residues 174 to 195 (FVIYMFTVHFLIPLSVIFFCYG) form a helical membrane-spanning segment. Residues 196–223 (RLLCAVKEAAAAQQESETTQRAEKEVSR) are Cytoplasmic-facing. Residues 224–245 (MVVIMVIGFLVCWLPYASVAWW) traverse the membrane as a helical segment. At 246 to 257 (IFCNQGSDFGPI) the chain is on the extracellular side. A helical transmembrane segment spans residues 258–279 (FMTLPSFFAKRPAIYNPMIYIC). K267 carries the post-translational modification N6-(retinylidene)lysine. Residues 280–289 (MNKQFRHCMI) lie on the Cytoplasmic side of the membrane.

It belongs to the G-protein coupled receptor 1 family. Opsin subfamily. In terms of processing, phosphorylated on some or all of the serine and threonine residues present in the C-terminal region. Contains one covalently linked retinal chromophore.

The protein resides in the membrane. Its subcellular location is the cell projection. The protein localises to the cilium. It is found in the photoreceptor outer segment. In terms of biological role, photoreceptor required for image-forming vision at low light intensity. While most salt water fish species use retinal as chromophore, most freshwater fish use 3-dehydroretinal, or a mixture of retinal and 3-dehydroretinal. Light-induced isomerization of 11-cis to all-trans retinal triggers a conformational change that activates signaling via G-proteins. Subsequent receptor phosphorylation mediates displacement of the bound G-protein alpha subunit by arrestin and terminates signaling. This Limnocottus pallidus (Ray-finned fish) protein is Rhodopsin (rho).